Reading from the N-terminus, the 690-residue chain is MSERILVNCALPYANGPLHLGHIAGAYLAADIFVRFNRLNGNEVLFVSGSDEYGTPITITAEKNKTSPQNVADIYHREHEQTFKNLDIVFDIFTRTTDPEHVKDVDEFFINLLNKNYLEKRYMVSPYCKSTGKFMPDRYIHGTCPYCGFNDARGDQCDECGRTLDPIELINPRCTSSNEEPLFIATEHFFLRLDLLSDELLNYLNTRENWKPNVINFTRSIINEGLRPRPITRDIDWGVPIPLNGFEGKRIYVWFEALIGYITGARVYSKNIKDDDYWKKFWLDKNVKSYYFIGKDNIPFHTIIWPAMLIAHGDYNLPYNVPANEYLRFEGAQFSKSRGIGYTVNEALSLVNKNYLRYYMASIMPETGDSSFSLNELVSRVNSELIDKYGNFIYRVLGFISNRKINIKKCEPDSIINEFKRFFDEYSESIKNIKIKNGLQIWLEAVTLANNYFNSEAPWNINDHERLNQVLFTSLKISMYLTAMLYPYVPSASSEILSSLGFKTVNYKFDDMLGFDDFRPLKGEPPFKKLEIADKKINIDLMVGTVKYVNDHPNADNLYVLGVHADRDITIVSNIKKYLTPENLQGRRILLIRNVKPATIRGIKSEAIIIAVQHGERIIIPEVNADDGSRMKIDGFDFNGDIISMDEIKRYKFIVDKNELVLEYNNSRFIITENGKPLKINAPDGSSIVL.

The 'HIGH' region signature appears at 12 to 22; it reads PYANGPLHLGH. Zn(2+) contacts are provided by Cys144, Cys147, Cys157, and Cys160. The short motif at 333-337 is the 'KMSKS' region element; sequence QFSKS. Lys336 lines the ATP pocket. The tRNA-binding domain occupies 535–632; the sequence is KKINIDLMVG…VNADDGSRMK (98 aa).

It belongs to the class-I aminoacyl-tRNA synthetase family. MetG type 1 subfamily. In terms of assembly, homodimer. It depends on Zn(2+) as a cofactor.

It localises to the cytoplasm. It carries out the reaction tRNA(Met) + L-methionine + ATP = L-methionyl-tRNA(Met) + AMP + diphosphate. Functionally, is required not only for elongation of protein synthesis but also for the initiation of all mRNA translation through initiator tRNA(fMet) aminoacylation. This Picrophilus torridus (strain ATCC 700027 / DSM 9790 / JCM 10055 / NBRC 100828 / KAW 2/3) protein is Methionine--tRNA ligase.